A 372-amino-acid chain; its full sequence is 3,5-dihydroxyphenylacetyl-CoA synthase (372 aa).

Residue Cys-160 is part of the active site.

This sequence belongs to the thiolase-like superfamily. Chalcone/stilbene synthases family.

It carries out the reaction 4 malonyl-CoA + 4 H(+) = (3,5-dihydroxyphenyl)acetyl-CoA + 4 CO2 + 3 CoA + H2O. It functions in the pathway antibiotic biosynthesis. Involved in the biosynthesis of the nonproteinogenic amino acid monomer (S)-3,5-dihydroxyphenylglycine (Dpg) responsible of the production of balhimycin antibiotic. Catalyzes the Claisen condensation of four molecules of malonyl-CoA to yield 3,5-dihydroxyphenylacetyl-CoA (DPA-CoA) and three free coenzyme A (CoA). DpgA requires the presence of the dehydratases DpgB and DpgD to facilitate the aromatization of the DPA-S-DgpA or DPA-S-CoA intermediate. This is 3,5-dihydroxyphenylacetyl-CoA synthase from Amycolatopsis balhimycina.